The sequence spans 647 residues: DNA mismatch repair protein MutL (647 aa).

The interval 393 to 423 is disordered; that stretch reads VSLVANKQQPTVKQAKRSADDSDSEHGKLDY. Residues 409 to 423 show a composition bias toward basic and acidic residues; it reads RSADDSDSEHGKLDY.

Belongs to the DNA mismatch repair MutL/HexB family.

This protein is involved in the repair of mismatches in DNA. It is required for dam-dependent methyl-directed DNA mismatch repair. May act as a 'molecular matchmaker', a protein that promotes the formation of a stable complex between two or more DNA-binding proteins in an ATP-dependent manner without itself being part of a final effector complex. The protein is DNA mismatch repair protein MutL of Streptococcus thermophilus (strain CNRZ 1066).